Reading from the N-terminus, the 800-residue chain is DNA mismatch repair protein MutS (800 aa).

616–623 (GPNMGGKS) is a binding site for ATP.

It belongs to the DNA mismatch repair MutS family.

This protein is involved in the repair of mismatches in DNA. It is possible that it carries out the mismatch recognition step. This protein has a weak ATPase activity. The chain is DNA mismatch repair protein MutS from Buchnera aphidicola subsp. Baizongia pistaciae (strain Bp).